A 37-amino-acid chain; its full sequence is Bacteriocin lactococcin MMFII (37 aa).

Cys-9 and Cys-14 are joined by a disulfide.

It localises to the secreted. Its function is as follows. Bacteriocin active against Listeria monocytogenes and Lactococcus cremoris. The polypeptide is Bacteriocin lactococcin MMFII (Lactococcus lactis subsp. lactis (Streptococcus lactis)).